The chain runs to 331 residues: F-box protein At2g26160 (331 aa).

One can recognise an F-box domain in the interval proline 4 to proline 52.

This is F-box protein At2g26160 from Arabidopsis thaliana (Mouse-ear cress).